A 459-amino-acid chain; its full sequence is Fibrinogen C domain-containing protein 1 (459 aa).

The tract at residues 1-22 is disordered; that stretch reads MVHERWKTVGSASQLEDRPRDK. The Cytoplasmic segment spans residues 1-33; sequence MVHERWKTVGSASQLEDRPRDKPQRASCSYVLC. A helical; Signal-anchor for type II membrane protein membrane pass occupies residues 34–54; it reads TVLLSLAVLLAVAVTGVVLFL. The Extracellular portion of the chain corresponds to 55-459; the sequence is NHTHTPGTAP…MKIRPVREDR (405 aa). In terms of domain architecture, Fibrinogen C-terminal spans 233–456; sequence CANGSRPRDC…FSEMKIRPVR (224 aa). Residues cysteine 242 and cysteine 271 are joined by a disulfide bond. Asparagine 338 carries N-linked (GlcNAc...) asparagine glycosylation. Ca(2+)-binding residues include aspartate 391 and aspartate 393. Cysteine 399 and cysteine 412 form a disulfide bridge.

As to quaternary structure, homotetramer; disulfide-linked.

The protein localises to the membrane. Its function is as follows. Acetyl group-binding receptor which shows a high-affinity and calcium-dependent binding to acetylated structures such as chitin, some N-acetylated carbohydrates, and amino acids, but not to their non-acetylated counterparts. Can facilitate the endocytosis of acetylated components. This chain is Fibrinogen C domain-containing protein 1 (Fibcd1), found in Mus musculus (Mouse).